The primary structure comprises 267 residues: Hydrolase FUB4 (267 aa).

Catalysis depends on charge relay system residues S93, D183, and H243.

The protein belongs to the AB hydrolase 3 family.

It participates in mycotoxin biosynthesis. Its function is as follows. Hydrolase; part of the gene cluster that mediates the biosynthesis of fusaric acid, a mycotoxin with low to moderate toxicity to animals and humans, but with high phytotoxic properties. L-aspartate is suggested as fusaric acid amino acid precursor that is activated and further processed to O-acetyl-L-homoserine by cluster enzymes aspartate kinase FUB3 and homoserine O-acetyltransferase FUB5, as well as enzymes of the primary metabolism. The polyketide synthase (PKS) FUB1 generates the triketide trans-2-hexenal which is presumptively released by the hydrolase FUB4 and linked to the NRPS-bound amino acid precursor by NAD(P)-dependent dehydrogenase FUB6. FUB1, FUB4, and the non-canonical NRPS Fub8 may form an enzyme complex. Further processing of the NRPS-bound intermediate might be carried out by FUB6 and the sulfhydrylase FUB7, enabling a spontaneous electrocyclization to close the carbon backbone of fusaric acid. Dihydrofusaric acid is likely to be released via reduction by the thioester reductase (TR) domain of FUB8 whereupon the final oxidation to fusaric acid may (also) be performed by the FMN-dependent dehydrogenase FUB9. The protein is Hydrolase FUB4 of Gibberella moniliformis (strain M3125 / FGSC 7600) (Maize ear and stalk rot fungus).